Here is a 263-residue protein sequence, read N- to C-terminus: ATP synthase subunit delta (263 aa).

This sequence belongs to the ATPase delta chain family. F-type ATPases have 2 components, F(1) - the catalytic core - and F(0) - the membrane proton channel. F(1) has five subunits: alpha(3), beta(3), gamma(1), delta(1), epsilon(1). F(0) has three main subunits: a(1), b(2) and c(10-14). The alpha and beta chains form an alternating ring which encloses part of the gamma chain. F(1) is attached to F(0) by a central stalk formed by the gamma and epsilon chains, while a peripheral stalk is formed by the delta and b chains.

Its subcellular location is the cell membrane. In terms of biological role, f(1)F(0) ATP synthase produces ATP from ADP in the presence of a proton or sodium gradient. F-type ATPases consist of two structural domains, F(1) containing the extramembraneous catalytic core and F(0) containing the membrane proton channel, linked together by a central stalk and a peripheral stalk. During catalysis, ATP synthesis in the catalytic domain of F(1) is coupled via a rotary mechanism of the central stalk subunits to proton translocation. Its function is as follows. This protein is part of the stalk that links CF(0) to CF(1). It either transmits conformational changes from CF(0) to CF(1) or is implicated in proton conduction. This Cutibacterium acnes (strain DSM 16379 / KPA171202) (Propionibacterium acnes) protein is ATP synthase subunit delta.